The chain runs to 128 residues: Ribonuclease pancreatic (128 aa).

Residues 1–23 (AESSAMKFQRQHVDSEGSSSSNA) are disordered. Substrate is bound by residues K7 and R10. The active-site Proton acceptor is the H12. Disulfide bonds link C26–C84, C40–C95, C58–C110, and C65–C72. Residues 41–45 (KPVNT), K66, and R85 each bind substrate. The Proton donor role is filled by H119.

This sequence belongs to the pancreatic ribonuclease family. Monomer. Interacts with and forms tight 1:1 complexes with RNH1. Dimerization of two such complexes may occur. Interaction with RNH1 inhibits this protein. Pancreas.

Its subcellular location is the secreted. The catalysed reaction is an [RNA] containing cytidine + H2O = an [RNA]-3'-cytidine-3'-phosphate + a 5'-hydroxy-ribonucleotide-3'-[RNA].. The enzyme catalyses an [RNA] containing uridine + H2O = an [RNA]-3'-uridine-3'-phosphate + a 5'-hydroxy-ribonucleotide-3'-[RNA].. In terms of biological role, endonuclease that catalyzes the cleavage of RNA on the 3' side of pyrimidine nucleotides. Acts on single-stranded and double-stranded RNA. The polypeptide is Ribonuclease pancreatic (RNASE1) (Hydrochoerus hydrochaeris (Capybara)).